The following is a 328-amino-acid chain: CCAAT/enhancer-binding protein beta (328 aa).

Position 3 is an asymmetric dimethylarginine; by CARM1 (arginine 3). The residue at position 39 (lysine 39) is an N6-methylated lysine. The disordered stretch occupies residues 165–274 (DSCKGPRKEE…NIAVRKSRDK (110 aa)). The segment covering 200-231 (SVPSGSSGNLSTSSSSSPPGTPNPSESSKSAA) has biased composition (low complexity). Residue threonine 220 is modified to Phosphothreonine; by RPS6KA1, CDK2 and MAPK. Over residues 248-264 (KCVDKHSDEYKLRRERN) the composition is skewed to basic and acidic residues. The 64-residue stretch at 254–317 (SDEYKLRRER…STLRNLFKQL (64 aa)) folds into the bZIP domain. The basic motif stretch occupies residues 258–278 (KLRRERNNIAVRKSRDKAKMR). The leucine-zipper stretch occupies residues 280–287 (LETQHKVL).

This sequence belongs to the bZIP family. C/EBP subfamily. As to quaternary structure, binds DNA as a dimer. Interacts (not methylated) with MED23, MED26, SMARCA2, SMARCB1 and SMARCC1. Methylated. Methylation at Arg-3 by CARM1 and at Lys-39 by EHMT2, inhibit transactivation activity. Methylation is probably inhibited by phosphorylation at Thr-220. In terms of tissue distribution, specifically expressed in myelomoncytic cells.

It is found in the nucleus. In terms of biological role, important transcriptional activator regulating the expression of genes involved in immune and inflammatory responses. Binds to regulatory regions of several acute-phase and cytokines genes and probably plays a role in the regulation of acute-phase reaction, inflammation and hemopoiesis. The consensus recognition site is 5'-T[TG]NNGNAA[TG]-3'. Functions in brown adipose tissue (BAT) differentiation. Regulates the transcriptional induction of peroxisome proliferator-activated receptor gamma (PPARG). Binds to the MGF and MIM-1 promoters and activates the transcription of these genes. Important transcription factor regulating the expression of genes involved in immune and inflammatory responses. Also plays a significant role in adipogenesis, as well as in the gluconeogenic pathway, liver regeneration, and hematopoiesis. The consensus recognition site is 5'-T[TG]NNGNAA[TG]-3'. Its functional capacity is governed by protein interactions and post-translational protein modifications. This is CCAAT/enhancer-binding protein beta (CEBPB) from Gallus gallus (Chicken).